Consider the following 150-residue polypeptide: 3-dehydroquinate dehydratase (150 aa).

Y23 (proton acceptor) is an active-site residue. Residues N75, H81, and D88 each coordinate substrate. H101 serves as the catalytic Proton donor. Substrate-binding positions include 102–103 (LS) and R112.

The protein belongs to the type-II 3-dehydroquinase family. Homododecamer.

The catalysed reaction is 3-dehydroquinate = 3-dehydroshikimate + H2O. The protein operates within metabolic intermediate biosynthesis; chorismate biosynthesis; chorismate from D-erythrose 4-phosphate and phosphoenolpyruvate: step 3/7. Its function is as follows. Catalyzes a trans-dehydration via an enolate intermediate. In Pseudomonas savastanoi pv. phaseolicola (strain 1448A / Race 6) (Pseudomonas syringae pv. phaseolicola (strain 1448A / Race 6)), this protein is 3-dehydroquinate dehydratase.